We begin with the raw amino-acid sequence, 129 residues long: Cytochrome c oxidase subunit 5B, mitochondrial (129 aa).

Residues 1 to 31 (MASRLLRGVGALASQALRARGPNGVSVVRSM) constitute a mitochondrion transit peptide. 2 positions are modified to N6-acetyllysine: K68 and K86. Positions 91, 93, 113, and 116 each coordinate Zn(2+). K121 bears the N6-acetyllysine mark.

It belongs to the cytochrome c oxidase subunit 5B family. In terms of assembly, component of the cytochrome c oxidase (complex IV, CIV), a multisubunit enzyme composed of 14 subunits. The complex is composed of a catalytic core of 3 subunits MT-CO1, MT-CO2 and MT-CO3, encoded in the mitochondrial DNA, and 11 supernumerary subunits COX4I1 (or COX4I2), COX5A, COX5B, COX6A2 (or COX6A1), COX6B1 (or COX6B2), COX6C, COX7A1 (or COX7A2), COX7B, COX7C, COX8B and NDUFA4, which are encoded in the nuclear genome. The complex exists as a monomer or a dimer and forms supercomplexes (SCs) in the inner mitochondrial membrane with NADH-ubiquinone oxidoreductase (complex I, CI) and ubiquinol-cytochrome c oxidoreductase (cytochrome b-c1 complex, complex III, CIII), resulting in different assemblies (supercomplex SCI(1)III(2)IV(1) and megacomplex MCI(2)III(2)IV(2)).

The protein localises to the mitochondrion inner membrane. Its pathway is energy metabolism; oxidative phosphorylation. Its function is as follows. Component of the cytochrome c oxidase, the last enzyme in the mitochondrial electron transport chain which drives oxidative phosphorylation. The respiratory chain contains 3 multisubunit complexes succinate dehydrogenase (complex II, CII), ubiquinol-cytochrome c oxidoreductase (cytochrome b-c1 complex, complex III, CIII) and cytochrome c oxidase (complex IV, CIV), that cooperate to transfer electrons derived from NADH and succinate to molecular oxygen, creating an electrochemical gradient over the inner membrane that drives transmembrane transport and the ATP synthase. Cytochrome c oxidase is the component of the respiratory chain that catalyzes the reduction of oxygen to water. Electrons originating from reduced cytochrome c in the intermembrane space (IMS) are transferred via the dinuclear copper A center (CU(A)) of subunit 2 and heme A of subunit 1 to the active site in subunit 1, a binuclear center (BNC) formed by heme A3 and copper B (CU(B)). The BNC reduces molecular oxygen to 2 water molecules using 4 electrons from cytochrome c in the IMS and 4 protons from the mitochondrial matrix. This Bos taurus (Bovine) protein is Cytochrome c oxidase subunit 5B, mitochondrial (COX5B).